The chain runs to 659 residues: Crossover junction endonuclease MUS81 (659 aa).

Positions 59-78 match the Helix-hairpin-helix motif 1 motif; it reads KDLSQIKGFGKWMVKLMKGY. Residues 404–503 form the ERCC4 domain; the sequence is ILILDDREKF…KKLIYILEGD (100 aa). Residues 585–622 carry the Helix-hairpin-helix motif 2 motif; it reads TISDVFAIQLMQVPQVTEEIAIAVLDMYPTLLSLASAY.

The protein belongs to the XPF family. As to quaternary structure, forms a heterodimer with EME1A or EME1B. It depends on Mg(2+) as a cofactor. Ca(2+) is required as a cofactor. Ubiquitous but preferentially expressed in young flowers buds, notably in anthers.

It localises to the nucleus. It is found in the nucleolus. Interacts with EME1 to form a DNA structure-specific endonuclease with substrate preference for branched DNA structures with a 5'-end at the branch nick. Typical substrates include 3'-flap structures, D-loops, replication forks, nicked Holliday junctions and also intact Holliday junctions with a reduced efficiency. May be required in mitosis for the processing of stalled or collapsed replication fork intermediates. Plays a role in DNA repair and in genotoxic stress-induced homologous recombination (HR) in somatic cells. Mediates a subset of meiotic recombination events that are insensitive to crossover interference. Together with SEND1, essential for the resolution of toxic replication structures to ensure genome stability, and to maintain telomere integrity and replication. This is Crossover junction endonuclease MUS81 from Arabidopsis thaliana (Mouse-ear cress).